The sequence spans 60 residues: Large ribosomal subunit protein bL32 (60 aa).

Residues methionine 1–alanine 21 form a disordered region.

The protein belongs to the bacterial ribosomal protein bL32 family.

This is Large ribosomal subunit protein bL32 from Chlamydia felis (strain Fe/C-56) (Chlamydophila felis).